The following is a 195-amino-acid chain: Dephospho-CoA kinase (195 aa).

The 194-residue stretch at 2 to 195 (IIGLTGGIGV…DIVDSLSLSS (194 aa)) folds into the DPCK domain. 10 to 15 (GVGKSF) lines the ATP pocket.

This sequence belongs to the CoaE family.

The protein resides in the cytoplasm. It carries out the reaction 3'-dephospho-CoA + ATP = ADP + CoA + H(+). Its pathway is cofactor biosynthesis; coenzyme A biosynthesis; CoA from (R)-pantothenate: step 5/5. Catalyzes the phosphorylation of the 3'-hydroxyl group of dephosphocoenzyme A to form coenzyme A. This chain is Dephospho-CoA kinase, found in Wolbachia sp. subsp. Brugia malayi (strain TRS).